Consider the following 165-residue polypeptide: Xanthine-guanine phosphoribosyltransferase (165 aa).

Residues 41–42 (RG) and 98–106 (DDLTDTGKT) each bind 5-phospho-alpha-D-ribose 1-diphosphate. Mg(2+) is bound at residue D99. The guanine site is built by D102 and I145. Xanthine-binding residues include D102 and I145. Residues 102-106 (DTGKT) and 144-145 (WI) each bind GMP.

It belongs to the purine/pyrimidine phosphoribosyltransferase family. XGPT subfamily. Homotetramer. Mg(2+) is required as a cofactor.

The protein localises to the cell inner membrane. It catalyses the reaction GMP + diphosphate = guanine + 5-phospho-alpha-D-ribose 1-diphosphate. The enzyme catalyses XMP + diphosphate = xanthine + 5-phospho-alpha-D-ribose 1-diphosphate. It carries out the reaction IMP + diphosphate = hypoxanthine + 5-phospho-alpha-D-ribose 1-diphosphate. The protein operates within purine metabolism; GMP biosynthesis via salvage pathway; GMP from guanine: step 1/1. Its pathway is purine metabolism; XMP biosynthesis via salvage pathway; XMP from xanthine: step 1/1. In terms of biological role, purine salvage pathway enzyme that catalyzes the transfer of the ribosyl-5-phosphate group from 5-phospho-alpha-D-ribose 1-diphosphate (PRPP) to the N9 position of the 6-oxopurines guanine and xanthine to form the corresponding ribonucleotides GMP (guanosine 5'-monophosphate) and XMP (xanthosine 5'-monophosphate), with the release of PPi. To a lesser extent, also acts on hypoxanthine. The sequence is that of Xanthine-guanine phosphoribosyltransferase from Brucella anthropi (strain ATCC 49188 / DSM 6882 / CCUG 24695 / JCM 21032 / LMG 3331 / NBRC 15819 / NCTC 12168 / Alc 37) (Ochrobactrum anthropi).